A 344-amino-acid chain; its full sequence is Heat-inducible transcription repressor HrcA (344 aa).

This sequence belongs to the HrcA family.

Its function is as follows. Negative regulator of class I heat shock genes (grpE-dnaK-dnaJ and groELS operons). Prevents heat-shock induction of these operons. The chain is Heat-inducible transcription repressor HrcA from Streptococcus equi subsp. equi (strain 4047).